A 239-amino-acid chain; its full sequence is MNKNIIIKSIAALTILTSITGVGTTVVDGIQQTAKAENSVKLITNTNVAPYSGVTWMGAGTGFVVGNHTIITNKHVTYHMKVGDEIKAHPNGFYNNGGGLYKVTKIVDYPGKEDIAVVQVEEKSTQPKGRKFKDFTSKFNIASEAKENEPISVIGYPNPNGNKLQMYESTGKVLSVNGNIVTSDAVVQPGSSGSPILNSKREAIGVMYASDKPTGESTRSFAVYFSPEIKKFIADNLDK.

A signal peptide spans 1-36 (MNKNIIIKSIAALTILTSITGVGTTVVDGIQQTAKA). Active-site charge relay system residues include H75, D114, and S192.

Belongs to the peptidase S1B family.

The protein localises to the secreted. The polypeptide is Serine protease SplD (splD) (Staphylococcus aureus (strain Mu3 / ATCC 700698)).